Here is a 397-residue protein sequence, read N- to C-terminus: ATP-dependent RNA helicase RhlB (397 aa).

The Q motif signature appears at 9–37 (TRFHDFNLAPSLMHAIHDLGFPYCTPIQA). The Helicase ATP-binding domain occupies 40 to 220 (LGFTLRGQDA…KQWTVDPAIV (181 aa)). 53–60 (AQTGTGKT) contributes to the ATP binding site. The short motif at 166 to 169 (DEAD) is the DEAD box element. In terms of domain architecture, Helicase C-terminal spans 243–393 (DKYKLLYNLV…MPPAELLKPV (151 aa)).

Belongs to the DEAD box helicase family. RhlB subfamily. Component of the RNA degradosome, which is a multiprotein complex involved in RNA processing and mRNA degradation.

It localises to the cytoplasm. It carries out the reaction ATP + H2O = ADP + phosphate + H(+). DEAD-box RNA helicase involved in RNA degradation. Has RNA-dependent ATPase activity and unwinds double-stranded RNA. The polypeptide is ATP-dependent RNA helicase RhlB (Pseudomonas aeruginosa (strain UCBPP-PA14)).